Consider the following 196-residue polypeptide: MTASVLVGAAARLPLVTAELDALLRQVAQRDAEAFAAFYDQTRARVYGLITRVLRDPGYSEETTQDVYLQVWRNAAGYDPSVGSALSWLLTLAHRRAVDRVRSEQAASTRESRYGAISVDPPSDHVADDVLLDDERRRVAGCLDSLTDVQRECIQLAYYDGLTYAQVADRLAANLATIKSRMRDGIRALRKCLGVA.

The segment at 39-105 (YDQTRARVYG…RAVDRVRSEQ (67 aa)) is sigma-70 factor domain-2. Residues 62–65 (ETTQ) carry the Polymerase core binding motif. The tract at residues 142–191 (CLDSLTDVQRECIQLAYYDGLTYAQVADRLAANLATIKSRMRDGIRALRK) is sigma-70 factor domain-4. A DNA-binding region (H-T-H motif) is located at residues 164–183 (YAQVADRLAANLATIKSRMR).

The protein belongs to the sigma-70 factor family. ECF subfamily. In terms of assembly, interacts transiently with the RNA polymerase catalytic core formed by RpoA, RpoB, RpoC and RpoZ (2 alpha, 1 beta, 1 beta' and 1 omega subunit) to form the RNA polymerase holoenzyme that can initiate transcription. Interacts (via sigma-70 factor domain 4) with anti-sigma-K factor RskA.

Functionally, sigma factors are initiation factors that promote the attachment of RNA polymerase to specific initiation sites and are then released. Extracytoplasmic function (ECF) sigma factors are held in an inactive form by an anti-sigma factor until released by regulated intramembrane proteolysis. The chain is ECF RNA polymerase sigma factor SigK (sigK) from Mycolicibacterium vanbaalenii (strain DSM 7251 / JCM 13017 / BCRC 16820 / KCTC 9966 / NRRL B-24157 / PYR-1) (Mycobacterium vanbaalenii).